We begin with the raw amino-acid sequence, 463 residues long: Argininosuccinate lyase (463 aa).

This sequence belongs to the lyase 1 family. Argininosuccinate lyase subfamily.

Its subcellular location is the cytoplasm. It catalyses the reaction 2-(N(omega)-L-arginino)succinate = fumarate + L-arginine. It functions in the pathway amino-acid biosynthesis; L-arginine biosynthesis; L-arginine from L-ornithine and carbamoyl phosphate: step 3/3. This chain is Argininosuccinate lyase, found in Bacillus cereus (strain AH187).